We begin with the raw amino-acid sequence, 479 residues long: G-rich sequence factor 1 (479 aa).

A mitochondrion-targeting transit peptide spans 1–116 (MAGTRWVLGA…AAAAGPARGY (116 aa)). RRM domains are found at residues 149–245 (YLIR…PSPV) and 249–325 (GVVR…PSRR). Phosphoserine is present on serine 243. Serine 334 carries the phosphoserine modification. Residues 400-479 (HFVHMRGLPF…LFLNSCPKGK (80 aa)) enclose the RRM 3 domain.

As to quaternary structure, monomer. Found in a complex with DDX28, DHX30, FASTKD2 and FASTKD5. Interacts with the mitochondrial RNase P complex subunit TRMT10C/MRPP1. Interacts with the 2 components of the mitochondrial degradosome complex, PNPT1 and SUPV3L1, in an RNA-dependent manner.

It is found in the mitochondrion matrix. Regulator of post-transcriptional mitochondrial gene expression, required for assembly of the mitochondrial ribosome and for recruitment of mRNA and lncRNA. Binds RNAs containing the 14 base G-rich element. Preferentially binds RNAs transcribed from three contiguous genes on the light strand of mtDNA, the ND6 mRNA, and the long non-coding RNAs for MT-CYB and MT-ND5, each of which contains multiple consensus binding sequences. Involved in the degradosome-mediated decay of non-coding mitochondrial transcripts (MT-ncRNA) and tRNA-like molecules. Acts by unwinding G-quadruplex RNA structures in MT-ncRNA, thus facilitating their degradation by the degradosome. G-quadruplexes (G4) are non-canonical 4 stranded structures formed by transcripts from the light strand of mtDNA. This is G-rich sequence factor 1 (Grsf1) from Mus musculus (Mouse).